The chain runs to 635 residues: 1-deoxy-D-xylulose-5-phosphate synthase (635 aa).

Residues histidine 72 and 113–115 contribute to the thiamine diphosphate site; that span reads GHA. A Mg(2+)-binding site is contributed by aspartate 144. Thiamine diphosphate-binding positions include 145-146, asparagine 174, tyrosine 286, and glutamate 369; that span reads GA. Mg(2+) is bound at residue asparagine 174.

The protein belongs to the transketolase family. DXPS subfamily. As to quaternary structure, homodimer. The cofactor is Mg(2+). It depends on thiamine diphosphate as a cofactor.

The enzyme catalyses D-glyceraldehyde 3-phosphate + pyruvate + H(+) = 1-deoxy-D-xylulose 5-phosphate + CO2. Its pathway is metabolic intermediate biosynthesis; 1-deoxy-D-xylulose 5-phosphate biosynthesis; 1-deoxy-D-xylulose 5-phosphate from D-glyceraldehyde 3-phosphate and pyruvate: step 1/1. Functionally, catalyzes the acyloin condensation reaction between C atoms 2 and 3 of pyruvate and glyceraldehyde 3-phosphate to yield 1-deoxy-D-xylulose-5-phosphate (DXP). The chain is 1-deoxy-D-xylulose-5-phosphate synthase from Acaryochloris marina (strain MBIC 11017).